Here is a 342-residue protein sequence, read N- to C-terminus: RNA 3'-terminal phosphate cyclase (342 aa).

ATP is bound by residues Gln102 and 283–287 (HLADQ). The active-site Tele-AMP-histidine intermediate is His308.

Belongs to the RNA 3'-terminal cyclase family. Type 1 subfamily.

The protein resides in the cytoplasm. It carries out the reaction a 3'-end 3'-phospho-ribonucleotide-RNA + ATP = a 3'-end 2',3'-cyclophospho-ribonucleotide-RNA + AMP + diphosphate. In terms of biological role, catalyzes the conversion of 3'-phosphate to a 2',3'-cyclic phosphodiester at the end of RNA. The mechanism of action of the enzyme occurs in 3 steps: (A) adenylation of the enzyme by ATP; (B) transfer of adenylate to an RNA-N3'P to produce RNA-N3'PP5'A; (C) and attack of the adjacent 2'-hydroxyl on the 3'-phosphorus in the diester linkage to produce the cyclic end product. The biological role of this enzyme is unknown but it is likely to function in some aspects of cellular RNA processing. This is RNA 3'-terminal phosphate cyclase from Pseudomonas fluorescens (strain ATCC BAA-477 / NRRL B-23932 / Pf-5).